Here is a 175-residue protein sequence, read N- to C-terminus: Large ribosomal subunit protein uL22 (175 aa).

The interval 113–175 is disordered; that stretch reads VESRPVKDQR…EASETKGGSD (63 aa). The segment covering 136-154 has biased composition (low complexity); the sequence is KTAGRAPAKKAGASSGATK. A compositionally biased stretch (basic and acidic residues) spans 166 to 175; the sequence is EASETKGGSD.

It belongs to the universal ribosomal protein uL22 family. As to quaternary structure, part of the 50S ribosomal subunit.

In terms of biological role, this protein binds specifically to 23S rRNA; its binding is stimulated by other ribosomal proteins, e.g. L4, L17, and L20. It is important during the early stages of 50S assembly. It makes multiple contacts with different domains of the 23S rRNA in the assembled 50S subunit and ribosome. Functionally, the globular domain of the protein is located near the polypeptide exit tunnel on the outside of the subunit, while an extended beta-hairpin is found that lines the wall of the exit tunnel in the center of the 70S ribosome. This Mycobacterium leprae (strain TN) protein is Large ribosomal subunit protein uL22.